Here is a 282-residue protein sequence, read N- to C-terminus: Thiazole synthase (282 aa).

Lys-113 functions as the Schiff-base intermediate with DXP in the catalytic mechanism. 1-deoxy-D-xylulose 5-phosphate contacts are provided by residues Gly-174, 201–202, and 223–224; these read AG and NT.

Belongs to the ThiG family. As to quaternary structure, homotetramer. Forms heterodimers with either ThiH or ThiS.

It localises to the cytoplasm. The enzyme catalyses [ThiS sulfur-carrier protein]-C-terminal-Gly-aminoethanethioate + 2-iminoacetate + 1-deoxy-D-xylulose 5-phosphate = [ThiS sulfur-carrier protein]-C-terminal Gly-Gly + 2-[(2R,5Z)-2-carboxy-4-methylthiazol-5(2H)-ylidene]ethyl phosphate + 2 H2O + H(+). It participates in cofactor biosynthesis; thiamine diphosphate biosynthesis. Functionally, catalyzes the rearrangement of 1-deoxy-D-xylulose 5-phosphate (DXP) to produce the thiazole phosphate moiety of thiamine. Sulfur is provided by the thiocarboxylate moiety of the carrier protein ThiS. In vitro, sulfur can be provided by H(2)S. This is Thiazole synthase from Cupriavidus metallidurans (strain ATCC 43123 / DSM 2839 / NBRC 102507 / CH34) (Ralstonia metallidurans).